Here is a 608-residue protein sequence, read N- to C-terminus: Glutamine--fructose-6-phosphate aminotransferase [isomerizing] (608 aa).

Residue Cys2 is the Nucleophile; for GATase activity of the active site. A Glutamine amidotransferase type-2 domain is found at 2-217 (CGIVGIVGHK…DGDWAVVGKT (216 aa)). SIS domains lie at 283 to 422 (TDID…ARGT) and 456 to 598 (LSRE…VDQP). Residue Lys603 is the For Fru-6P isomerization activity of the active site.

It is found in the cytoplasm. It carries out the reaction D-fructose 6-phosphate + L-glutamine = D-glucosamine 6-phosphate + L-glutamate. Functionally, involved in the production of the root hair deformation (HAD) factor specifically on medicago. In Rhizobium leguminosarum bv. viciae, this protein is Glutamine--fructose-6-phosphate aminotransferase [isomerizing] (nodM).